The chain runs to 366 residues: Aminomethyltransferase (366 aa).

Belongs to the GcvT family. In terms of assembly, the glycine cleavage system is composed of four proteins: P, T, L and H.

It catalyses the reaction N(6)-[(R)-S(8)-aminomethyldihydrolipoyl]-L-lysyl-[protein] + (6S)-5,6,7,8-tetrahydrofolate = N(6)-[(R)-dihydrolipoyl]-L-lysyl-[protein] + (6R)-5,10-methylene-5,6,7,8-tetrahydrofolate + NH4(+). In terms of biological role, the glycine cleavage system catalyzes the degradation of glycine. This Bordetella pertussis (strain Tohama I / ATCC BAA-589 / NCTC 13251) protein is Aminomethyltransferase.